Consider the following 837-residue polypeptide: Outer membrane usher protein HifC (837 aa).

Residues 1-26 form the signal peptide; it reads MKTKNFPLNKIAFACTLLLANPVAWA. An intrachain disulfide couples Cys-813 to Cys-833.

Belongs to the fimbrial export usher family.

It localises to the cell outer membrane. Functionally, essential for piliation. The polypeptide is Outer membrane usher protein HifC (hifC) (Haemophilus influenzae).